Here is a 351-residue protein sequence, read N- to C-terminus: Putative aryl-alcohol dehydrogenase C977.14c (351 aa).

Position 113 is a phosphoserine (S113).

Belongs to the aldo/keto reductase family. Aldo/keto reductase 2 subfamily.

Its subcellular location is the cytoplasm. It localises to the nucleus. This is Putative aryl-alcohol dehydrogenase C977.14c from Schizosaccharomyces pombe (strain 972 / ATCC 24843) (Fission yeast).